The following is a 170-amino-acid chain: Probable T4-type lysozyme 1 (170 aa).

The Proton donor role is filled by glutamate 13. Aspartate 22 serves as the catalytic Nucleophile.

Belongs to the glycosyl hydrolase 24 family.

The enzyme catalyses Hydrolysis of (1-&gt;4)-beta-linkages between N-acetylmuramic acid and N-acetyl-D-glucosamine residues in a peptidoglycan and between N-acetyl-D-glucosamine residues in chitodextrins.. This chain is Probable T4-type lysozyme 1, found in Dictyostelium discoideum (Social amoeba).